Here is a 1069-residue protein sequence, read N- to C-terminus: Cellulose synthase A catalytic subunit 5 [UDP-forming] (1069 aa).

Met1 is modified (N-acetylmethionine). At 1–265 (MNTGGRLIAG…KSSKINPYRM (265 aa)) the chain is on the cytoplasmic side. Residues Cys39, Cys42, Cys58, Cys61, Cys66, Cys69, Cys81, and Cys84 each contribute to the Zn(2+) site. The RING-type; degenerate zinc finger occupies 39-85 (CQICGDEIELSVDGESFVACNECAFPVCRPCYEYERREGNQSCPQCK). A phosphoserine mark is found at Ser229 and Ser230. Residues 266 to 286 (LIVLRLVILGLFFHYRILHPV) traverse the membrane as a helical segment. Over 287-288 (ND) the chain is Extracellular. The helical transmembrane segment at 289 to 309 (AYALWLISVICEIWFAVSWVL) threads the bilayer. At 310–853 (DQFPKWYPIE…INSVVYPWTS (544 aa)) the chain is on the cytoplasmic side. Residues Ser348, Lys354, Glu355, and Asp384 each contribute to the UDP-alpha-D-glucose site. Asp384 is an active-site residue. Positions 438–464 (VRERRAMKRDYEEFKVKINALVATAQK) form a coiled coil. Lys525 contacts UDP-alpha-D-glucose. Mn(2+) is bound by residues Lys526 and Asp550. Residue Asp770 is part of the active site. Residues 854–874 (IPLLVYCSLPAICLLTGKFIV) form a helical membrane-spanning segment. Over 875–879 (PEISN) the chain is Extracellular. The helical transmembrane segment at 880–900 (YASILFMALFGSIAVTGILEM) threads the bilayer. Residues 901–915 (QWGKVGIDDWWRNEQ) are Cytoplasmic-facing. The chain crosses the membrane as a helical span at residues 916–936 (FWVIGGVSAHLFALFQGLLKV). The Extracellular segment spans residues 937 to 965 (LAGVETNFTVTSKAADDGEFSELYIFKWT). The N-linked (GlcNAc...) asparagine glycan is linked to Asn943. A helical membrane pass occupies residues 966 to 986 (SLLIPPTTLLIINVIGVIVGI). The Cytoplasmic portion of the chain corresponds to 987–997 (SDAISNGYDSW). A helical membrane pass occupies residues 998–1018 (GPLFGRLFFAFWVILHLYPFL). The Extracellular portion of the chain corresponds to 1019–1027 (KGLLGKQDR). A helical membrane pass occupies residues 1028–1048 (MPTIILVWSILLASILTLLWV). Residues 1049-1069 (RVNPFVAKGGPILEICGLDCL) are Cytoplasmic-facing.

It belongs to the glycosyltransferase 2 family. Plant cellulose synthase subfamily. The cofactor is Zn(2+). Mn(2+) is required as a cofactor. As to expression, expressed in young plants, stems and flowers.

The protein localises to the cell membrane. The catalysed reaction is [(1-&gt;4)-beta-D-glucosyl](n) + UDP-alpha-D-glucose = [(1-&gt;4)-beta-D-glucosyl](n+1) + UDP + H(+). The protein operates within glycan metabolism; plant cellulose biosynthesis. Catalytic subunit of cellulose synthase terminal complexes ('rosettes'), required for beta-1,4-glucan microfibril crystallization, a major mechanism of the cell wall formation. The sequence is that of Cellulose synthase A catalytic subunit 5 [UDP-forming] from Arabidopsis thaliana (Mouse-ear cress).